Here is a 559-residue protein sequence, read N- to C-terminus: MRYIELAQLYQKLEKTTMKLIKTRLVADFLKKVPEDHLEFIPYLILGDVFPEWDERELGVGEKLLIKAVSMATGIDSKEIENSVKDTGDLGESIALAVKRRKQKSFFSQPLTIKRVYQTLVKVAETTGEGSQDKKMKYLANLFMDAEPIEAKYIARTVLGTMRTGVAEGLLRDAISLAFNVKVELVERAYMLTSDFGFVAKIAKTEGNDGLAKVTIQIGKPIKPMLAQQAANIKEALLEMGGEAEFEIKYDGARVQVHKDGEKVTIYSRRLENVTRAIPEIVEAIKEALKPAKAIVEGELVAIGEDGRPLPFQYVLRRFRRKYNIEEMMEKIPLELNLFDVLYVDGVSLIDTKFMERRKKLEEIVEANGKVKIAENLITKNVEEAEQFYKRALEMGHEGLMAKRLDAIYEPGNRGKKWLKIKPTMENLDLVIIGAEWGEGRRAHLLGSFILGAYDPETGEFLEVGKVGSGFTDDDLVEFTKMLRPLIIKEEGKRVWIQPKVVIEVTYQEIQKSPKYRSGFALRFPRYVALREDKGPEDADTIERIAQLYELQERMKGKV.

Glutamate 247 contacts ATP. The active-site N6-AMP-lysine intermediate is the lysine 249. ATP-binding residues include arginine 254, arginine 269, glutamate 299, phenylalanine 339, arginine 414, and lysine 420.

This sequence belongs to the ATP-dependent DNA ligase family. Requires Mg(2+) as cofactor.

The enzyme catalyses ATP + (deoxyribonucleotide)n-3'-hydroxyl + 5'-phospho-(deoxyribonucleotide)m = (deoxyribonucleotide)n+m + AMP + diphosphate.. DNA ligase that seals nicks in double-stranded DNA during DNA replication, DNA recombination and DNA repair. In Pyrococcus abyssi, this protein is DNA ligase.